A 385-amino-acid chain; its full sequence is MAEQNDSNGNYDDGEEITEPEQLRKLFIGGLDYRTTDDGLKAHFEKWGNIVDVVVMKDPKTKRSRGFGFITYSQSYMIDNAQNARPHKIDGRTVEPKRAVPRQEIDSPNAGATVKKLFVGGLRDDHDEECLREYFKDFGQIVSVNIVSDKDTGKKRGFAFIEFDDYDPVDKIILQKTHSIKNKTLDVKKAIAKQDMDRQGGGGGRGGPRAGGRGGQGDRGQGGGGWGGQNRQNGGGNWGGAGGGGGFGNSGGNFGGGQGGGSGGWNQQGGSGGGPWNNQGGGNGGWNGGGGGGYGGGNSNGSWGGNGGGGGGGGGFGNEYQQSYGGGPQRNSNFGNNRPAPYSQGGGGGGFNKGNQGGGQGFAGNNYNTGGGGQGGNMGGGNRRY.

2 consecutive RRM domains span residues 24 to 101 and 115 to 192; these read RKLF…RAVP and KKLF…KAIA. Disordered stretches follow at residues 192-289 and 305-385; these read AKQD…WNGG and GNGG…NRRY. Gly residues-rich tracts occupy residues 199–289 and 305–317; these read QGGG…WNGG and GNGG…GGFG. A compositionally biased stretch (polar residues) spans 319–336; sequence EYQQSYGGGPQRNSNFGN. 2 stretches are compositionally biased toward gly residues: residues 344-362 and 369-385; these read QGGG…GQGF and TGGG…NRRY.

It localises to the nucleus. Its subcellular location is the cytoplasm. This protein is a component of ribonucleosomes. Could be needed to organize a concentration gradient of a dorsalizing morphogen (Dm) originating in the germinal vesicle. This chain is Heterogeneous nuclear ribonucleoprotein 87F (Hrb87F), found in Drosophila melanogaster (Fruit fly).